We begin with the raw amino-acid sequence, 248 residues long: Uracil-DNA glycosylase (248 aa).

The Proton acceptor role is filled by aspartate 85.

The protein belongs to the uracil-DNA glycosylase (UDG) superfamily. UNG family.

The protein localises to the cytoplasm. It carries out the reaction Hydrolyzes single-stranded DNA or mismatched double-stranded DNA and polynucleotides, releasing free uracil.. In terms of biological role, excises uracil residues from the DNA which can arise as a result of misincorporation of dUMP residues by DNA polymerase or due to deamination of cytosine. In Deinococcus deserti (strain DSM 17065 / CIP 109153 / LMG 22923 / VCD115), this protein is Uracil-DNA glycosylase.